The sequence spans 154 residues: Myoglobin (154 aa).

The 147-residue stretch at 2 to 148 (GLSDGEWQLV…FRKDIAAKYK (147 aa)) folds into the Globin domain. Phosphoserine is present on serine 4. Histidine 65 is a nitrite binding site. Residue histidine 65 coordinates O2. Threonine 68 carries the post-translational modification Phosphothreonine. Histidine 94 is a heme b binding site.

This sequence belongs to the globin family. As to quaternary structure, monomeric.

Its subcellular location is the cytoplasm. The protein localises to the sarcoplasm. It catalyses the reaction Fe(III)-heme b-[protein] + nitric oxide + H2O = Fe(II)-heme b-[protein] + nitrite + 2 H(+). It carries out the reaction H2O2 + AH2 = A + 2 H2O. Its function is as follows. Monomeric heme protein which primary function is to store oxygen and facilitate its diffusion within muscle tissues. Reversibly binds oxygen through a pentacoordinated heme iron and enables its timely and efficient release as needed during periods of heightened demand. Depending on the oxidative conditions of tissues and cells, and in addition to its ability to bind oxygen, it also has a nitrite reductase activity whereby it regulates the production of bioactive nitric oxide. Under stress conditions, like hypoxia and anoxia, it also protects cells against reactive oxygen species thanks to its pseudoperoxidase activity. This chain is Myoglobin (MB), found in Delphinus delphis (Short-beaked common dolphin).